Here is a 362-residue protein sequence, read N- to C-terminus: G-protein coupled receptor 6 (362 aa).

Residues 1 to 74 are Extracellular-facing; it reads MNASAASLND…PGLLLPAVNP (74 aa). Residues Asn2, Asn9, and Asn51 are each glycosylated (N-linked (GlcNAc...) asparagine). The chain crosses the membrane as a helical span at residues 75-94; the sequence is WDVLLCVSGTVIAGENALVV. The Cytoplasmic segment spans residues 95–106; that stretch reads ALIASTPALRTP. A helical transmembrane segment spans residues 107–130; that stretch reads MFVLVGSLATADLLAGCGLILHFV. Residues 131–142 lie on the Extracellular side of the membrane; it reads FQYLVPSETVSL. The chain crosses the membrane as a helical span at residues 143-164; it reads LTVGFLVASFAASVSSLLAITV. Residues 165 to 185 lie on the Cytoplasmic side of the membrane; that stretch reads DRYLSLYNALTYYSRRTLLGV. The helical transmembrane segment at 186 to 205 threads the bilayer; sequence HLLLAATWTVSLGLGLLPVL. The Extracellular segment spans residues 206-230; that stretch reads GWNCLAERAACSVVRPLARSHVALL. Residues 231 to 249 traverse the membrane as a helical segment; that stretch reads SAAFFMVFGIMLHLYVRIC. The Cytoplasmic segment spans residues 250–277; sequence QVVWRHAHQIALQQHCLAPPHLAATRKG. Residues 278-304 form a helical membrane-spanning segment; the sequence is VGTLAVVLGTFGASWLPFAIYCVVGSH. Topologically, residues 305–309 are extracellular; that stretch reads EDPAV. Residues 310–331 traverse the membrane as a helical segment; the sequence is YTYATLLPATYNSMINPIIYAF. Residues 332-362 are Cytoplasmic-facing; sequence RNQEIQRALWLLLCGCFQSKVPFRSRSPSEV. Cys345 carries S-palmitoyl cysteine lipidation. Ser356, Ser358, and Ser360 each carry phosphoserine.

The protein belongs to the G-protein coupled receptor 1 family.

The protein resides in the cell membrane. In terms of biological role, orphan receptor with constitutive G(s) signaling activity that activate cyclic AMP. Promotes neurite outgrowth and blocks myelin inhibition in neurons. In Homo sapiens (Human), this protein is G-protein coupled receptor 6 (GPR6).